Here is a 287-residue protein sequence, read N- to C-terminus: MDEVVKGLIKNEHVLVVATICTETVEYARKIHDTWPTATAAMGRVIAGSVLLASTLKDRQKIMVQIKGDGPLNEVVAEADSFYRVRAYVKRPHIYMGLKNEKIDVGRGVGKGFLNVIRDLGLREYYQSSVELQTGEIARDLAYYLNVSEQIPSAVSLGVYVEPDNSVKAAGGFMIQTMPETRTEIVEFLERKLSETQSTSSMILQGMDSLQILEEVVGLPIEVLHRGTVTYFCPCTKDRVINAIVTLGREEIQKMIEEGKTVDVECYFCKKKYEVTVEELKILLREI.

Cystine bridges form between cysteine 233–cysteine 235 and cysteine 266–cysteine 269.

This sequence belongs to the HSP33 family. In terms of processing, under oxidizing conditions two disulfide bonds are formed involving the reactive cysteines. Under reducing conditions zinc is bound to the reactive cysteines and the protein is inactive.

Its subcellular location is the cytoplasm. Functionally, redox regulated molecular chaperone. Protects both thermally unfolding and oxidatively damaged proteins from irreversible aggregation. Plays an important role in the bacterial defense system toward oxidative stress. The chain is 33 kDa chaperonin from Thermodesulfovibrio yellowstonii (strain ATCC 51303 / DSM 11347 / YP87).